The chain runs to 111 residues: Aquaporin-2 (111 aa).

Residues 1–6 (SIAFSR) are Cytoplasmic-facing. A helical transmembrane segment spans residues 7 to 27 (AVFSEFLATLLFVFFGLGSAL). At 28–37 (NWPSTVPIPT) the chain is on the extracellular side. A helical transmembrane segment spans residues 38-56 (VLQISMAFGLAIGTLVQTL). Topologically, residues 57 to 61 (GHISG) are cytoplasmic. An intramembrane region (discontinuously helical) is located at residues 62 to 71 (AHINPAVTVA). Residues 65 to 67 (NPA) carry the NPA 1 motif. Residues 72–82 (CLVGCHVSFLR) lie on the Cytoplasmic side of the membrane. A helical membrane pass occupies residues 83–104 (ATFYVAAQLLGAVAGAALLHKL). Topologically, residues 105-111 (TPEDIRG) are extracellular.

The protein belongs to the MIP/aquaporin (TC 1.A.8) family. As to quaternary structure, homotetramer. In terms of processing, serine phosphorylation is necessary and sufficient for expression at the apical membrane. Endocytosis is not phosphorylation-dependent. Post-translationally, N-glycosylated.

The protein localises to the apical cell membrane. Its subcellular location is the basolateral cell membrane. It is found in the cell membrane. The protein resides in the cytoplasmic vesicle membrane. It localises to the golgi apparatus. The protein localises to the trans-Golgi network membrane. The catalysed reaction is H2O(in) = H2O(out). The enzyme catalyses glycerol(in) = glycerol(out). Its function is as follows. Forms a water-specific channel that provides the plasma membranes of renal collecting duct with high permeability to water, thereby permitting water to move in the direction of an osmotic gradient. Plays an essential role in renal water homeostasis. Could also be permeable to glycerol. This is Aquaporin-2 from Macroscelides proboscideus (Short-eared elephant shrew).